Reading from the N-terminus, the 57-residue chain is Potassium channel toxin gamma-KTx 2.1 (57 aa).

An N-terminal signal peptide occupies residues 1 to 21 (MKISFVLLLTLFICSIGWSEA). Disulfide bonds link C28/C49, C34/C54, and C38/C56.

It belongs to the short scorpion toxin superfamily. Potassium channel inhibitor family. Gamma-KTx 2 subfamily. In terms of tissue distribution, expressed by the venom gland.

It localises to the secreted. Functionally, blocks human and/or rat Kv11.1/KCNH2/ERG1, Kv11.2/KCNH6/ERG2 and Kv11.3/KCNH7/ERG3 by binding to channel outer vestibule (S5P domain) with a 1:1 stoichiometry. Inhibition data are the following: hERG1 (reversible, Kd=7.7 nM, IC(50)=3.3 nM, IC(50)=11.9 nM), rERG1 (reversible, Kd=19 nM), hERG2 (reversible, Kd=77 nM), rERG2 (irreversible, Kd=4.2 nM), hERG3 (reversible, Kd=11.5 nM) and rERG3 (reversible, Kd=747 nM) potassium channels. Also has a minimal effect on rat ELK1/KCNH4 potassium channels (9% inhibition at 100 nM). Both this toxin and CnErgTx1 (AC Q86QT3) share mechanism of action and have overlapping binding sites on ERG1. The potency of these two toxins is not affected by elevating potassium ion concentration from 2 to 98 mM. In addition, at high toxin concentrations, block of ERG1 macroscopic currents by these two toxins is incomplete (88%). The blockade by this toxin is preferentially closed channel state-dependent, with a component of open, but not inactive state-dependent blockade. This toxin produces a concentration-dependent prolongation of QTc in the isolated rabbit heart (16.3% at 100 nM). The sequence is that of Potassium channel toxin gamma-KTx 2.1 from Mesobuthus eupeus (Lesser Asian scorpion).